We begin with the raw amino-acid sequence, 431 residues long: Chaperone SurA (431 aa).

The first 20 residues, 1–20, serve as a signal peptide directing secretion; it reads MKLTVVTFALLAFISFNTFA. PpiC domains are found at residues 171-272 and 281-381; these read QAEY…KIID and VAEL…QLMD.

The protein localises to the periplasm. It catalyses the reaction [protein]-peptidylproline (omega=180) = [protein]-peptidylproline (omega=0). In terms of biological role, chaperone involved in the correct folding and assembly of outer membrane proteins. Recognizes specific patterns of aromatic residues and the orientation of their side chains, which are found more frequently in integral outer membrane proteins. May act in both early periplasmic and late outer membrane-associated steps of protein maturation. The protein is Chaperone SurA of Pseudoalteromonas atlantica (strain T6c / ATCC BAA-1087).